Consider the following 562-residue polypeptide: MNINVANLLNGNYILLLFVVLSLGLCLGKLRLGPVQLGNSIGVLVVSLLLGQQHFSINTEALSLGFMLFIFCVGVEAGPNFFSIFFRDGKNYFMLALVMVGSAMLLALGLGKFFGWGIGLTAGMLAGSMTSTPVLVGAGDTLRNTASMGSQLGIEQDHLSLGYALTYLVGLVSLIFGARYLPKLQHQDLPTSAQQIARERGLDADSQRKVYLPVIRAYRVGPELVDWAAGKNLRELGIYRQTGCYIERIRRNGILASPDGDAVLQIGDEIALVGYPDSHSRLNSNFRDGKEVFDRDLLDMRIVTEEIVVKNHNAVGKRLSQLKLTDHGCFLNRIVRSQIEMPIDDSVVLNKGDVLQVSGDARRVKSIADRIGFISIHSQVTDLLAFCAFFVIGIMVGLITIQFSNFTFGIGNAAGLLFAGIMLGFLRANHPTFGYIPQGALNMVKEFGLMVFMAGVGLSAGSTINSSLGEVGIQMLASGLIVSLVPVVICFLFGAYVLKMNRALLFGAMMGARTCAPAMDIISDTARSNIPALGYAGTYAIANVLLTLAGSLIVIIWPELPG.

The next 6 helical transmembrane spans lie at 8–28, 32–52, 66–86, 93–113, 116–136, and 158–178; these read LLNGNYILLLFVVLSLGLCLG, LGPVQLGNSIGVLVVSLLLGQ, FMLFIFCVGVEAGPNFFSIFF, FMLALVMVGSAMLLALGLGKF, WGIGLTAGMLAGSMTSTPVLV, and HLSLGYALTYLVGLVSLIFGA. RCK C-terminal domains lie at 202 to 288 and 292 to 373; these read LDAD…NFRD and VFDR…RIGF. A run of 5 helical transmembrane segments spans residues 383–403, 406–426, 447–467, 478–498, and 537–557; these read LLAFCAFFVIGIMVGLITIQF, FTFGIGNAAGLLFAGIMLGFL, FGLMVFMAGVGLSAGSTINSS, SGLIVSLVPVVICFLFGAYVL, and GTYAIANVLLTLAGSLIVIIW.

This sequence belongs to the AAE transporter (TC 2.A.81) family. YbjL subfamily.

Its subcellular location is the cell membrane. The polypeptide is Putative transport protein PC1_1686 (Pectobacterium carotovorum subsp. carotovorum (strain PC1)).